We begin with the raw amino-acid sequence, 1203 residues long: Delphilin (1203 aa).

The 79-residue stretch at 1–79 (MPATNQGWPE…VPPSLGVLPG (79 aa)) folds into the PDZ 1 domain. Alanine 3 carries the S-palmitoyl cysteine lipid modification. Residues 215 to 270 (GAQRLRRSRSEERPERLLVSTRASAAPRRPDEPPPRKATSLLGGRTGPGGPRRTVR) form a disordered region. A compositionally biased stretch (low complexity) spans 231-241 (LLVSTRASAAP). A PDZ 2 domain is found at 268-345 (TVRVYKGNKS…MPTLVVEEGP (78 aa)). Serine 303 carries the post-translational modification Phosphoserine. Disordered stretches follow at residues 466-541 (ESSL…TPNP), 563-586 (IGTMSKSRASPPVPSLVGTSGPRT), 611-656 (LASP…PPSR), and 710-821 (SFVT…SHMS). Residues 500–509 (RSQGLETSLS) show a composition bias toward polar residues. Serine 572, serine 613, serine 644, and serine 647 each carry phosphoserine. Over residues 611 to 625 (LASPSSSESHPYASL) the composition is skewed to low complexity. Residues 715-740 (ERSSASECVSSSEEGSSLTYSSISDH) are compositionally biased toward low complexity. A compositionally biased stretch (pro residues) spans 741-756 (IPPPPLSPPPPPPLPF). Residues 774–784 (QSLTKPLTQIN) are compositionally biased toward polar residues. Residues 786–803 (PVPPPPPPPLPPPVPCAP) show a composition bias toward pro residues. Residues 812–1203 (HRRSETSHMS…SSGMVSPLAW (392 aa)) enclose the FH2 domain.

In terms of assembly, interacts with C-terminus of the glutamate receptor GRID2 via PDZ domain. Isoform 2 also interacts with Profilin-2/PFN2 and with the monocarboxylate transporter SLC16A7 via PDZ domain. The interaction of isoform 2 with GRID2 is dependent on GRID2 phosphorylation by PKA. Post-translationally, isoform 2 is palmitoylated. Palmitoylation of isoform 2 is necessary for the enhanced cell surface expression of GRID2, and is also responsible for the accumulation of isoform 2 within dendritic spines. Isoform 1 and isoform 2 are differentially localized, probably modulating GRID2 signaling in neurons. Isoform 1 is expressed in the cerebellum, but not in the cerebral cortex. Isoform 2 is expressed in the cell body of purkinge cells of the cerebellum and weakly expressed in the cerebrum and the brainstem as well as various nuclei of the thalamus. Isoform 2 is highly expressed in the cerebral cortex than in the cerebellum. Isoform 3 is expressed in the cerebellum and cerebrum.

It is found in the postsynaptic cell membrane. Its subcellular location is the cell projection. It localises to the dendritic spine. The protein resides in the synapse. The protein localises to the cell membrane. Functionally, postsynaptic scaffolding protein at the Purkinje cell synapse, where it may serve to link GRID2 with actin cytoskeleton and various signaling molecules. The polypeptide is Delphilin (Grid2ip) (Mus musculus (Mouse)).